A 460-amino-acid polypeptide reads, in one-letter code: NADH-ubiquinone oxidoreductase chain 4 (460 aa).

13 helical membrane-spanning segments follow: residues 22 to 42, 61 to 81, 94 to 113, 117 to 139, 148 to 168, 195 to 217, 225 to 245, 258 to 278, 285 to 304, 308 to 330, 351 to 371, 394 to 414, and 436 to 456; these read WLWP…ITWL, PLST…LLAS, RMYI…AFGA, IMFY…RWGN, TYFL…LLML, IWWA…HLWL, PVAG…YGMM, MVYP…SICL, SLIA…GILI, WGFT…LFCL, IALP…LALP, LILT…MFLM, and LLMA…ALLW.

This sequence belongs to the complex I subunit 4 family.

The protein localises to the mitochondrion membrane. It carries out the reaction a ubiquinone + NADH + 5 H(+)(in) = a ubiquinol + NAD(+) + 4 H(+)(out). In terms of biological role, core subunit of the mitochondrial membrane respiratory chain NADH dehydrogenase (Complex I) that is believed to belong to the minimal assembly required for catalysis. Complex I functions in the transfer of electrons from NADH to the respiratory chain. The immediate electron acceptor for the enzyme is believed to be ubiquinone. The polypeptide is NADH-ubiquinone oxidoreductase chain 4 (MT-ND4) (Gadus morhua (Atlantic cod)).